Consider the following 90-residue polypeptide: UPF0729 protein Bm1_03610 (90 aa).

It belongs to the UPF0729 family.

This chain is UPF0729 protein Bm1_03610, found in Brugia malayi (Filarial nematode worm).